A 143-amino-acid chain; its full sequence is Crossover junction endodeoxyribonuclease Hjc (143 aa).

Residue E12 coordinates Mg(2+). S32 is a catalytic residue. The Mg(2+) site is built by D42 and E55.

It belongs to the Holliday junction resolvase Hjc family. Homodimer. Requires Mg(2+) as cofactor.

The enzyme catalyses Endonucleolytic cleavage at a junction such as a reciprocal single-stranded crossover between two homologous DNA duplexes (Holliday junction).. A structure-specific endonuclease that resolves Holliday junction (HJ) intermediates during genetic recombination. Cleaves 4-way DNA junctions introducing paired nicks in opposing strands, leaving a 5'-terminal phosphate and a 3'-terminal hydroxyl group that are subsequently ligated to produce recombinant products. Its function is as follows. Hjc, Hjm (Hel308) and PINA coordinate HJ migration and cleavage of replication forks in a coordinated way. This chain is Crossover junction endodeoxyribonuclease Hjc, found in Saccharolobus islandicus (strain REY15A) (Sulfolobus islandicus).